Consider the following 775-residue polypeptide: E3 ubiquitin-protein ligase UHRF1 (775 aa).

The Ubiquitin-like domain maps to 1–77; that stretch reads MWIQVRTMDG…IVQLLVRQIP (77 aa). The tract at residues 81–128 is disordered; the sequence is PTKDKECGISDADSGCGSGQGESDKNSSCGEGATDVDGQPAGINSENV. Tudor-like regions lie at residues 131–207 and 214–283; these read SLYK…LRAR and DLKV…IEEP. The tract at residues 293–301 is linker; the sequence is PQKRQNGPE. The segment at 299–366 adopts a PHD-type zinc-finger fold; it reads GPECKHCKDN…DWYCPDCRND (68 aa). Histone H3R2me0 binding stretches follow at residues 333–337 and 353–355; these read CDECD and PQD. Positions 419–582 constitute a YDG domain; the sequence is GPIPGVPVGT…FLVWRYLLRR (164 aa). The required to promote base flipping stretch occupies residues 445-446; that stretch reads HV. DNA is bound by residues 463 to 464 and aspartate 469; that span reads AG. 2 required for formation of a 5-methylcytosine-binding pocket regions span residues 466-469 and 478-481; these read YEDD and YTGS. The segment covering 616-628 has biased composition (basic and acidic residues); it reads ASKEREKENKTED. The interval 616-655 is disordered; it reads ASKEREKENKTEDELSESPSKGKRKRNSAGSGLSDAKSTP. The RING-type zinc finger occupies 706-745; the sequence is CICCQEVVYEPITTECHHNICKGCLDRSFKALVHNCPACR.

It is found in the nucleus. It catalyses the reaction S-ubiquitinyl-[E2 ubiquitin-conjugating enzyme]-L-cysteine + [acceptor protein]-L-lysine = [E2 ubiquitin-conjugating enzyme]-L-cysteine + N(6)-ubiquitinyl-[acceptor protein]-L-lysine.. Its pathway is protein modification; protein ubiquitination. Its function is as follows. Multidomain protein that acts as a key epigenetic regulator by bridging DNA methylation and chromatin modification. Specifically recognizes and binds hemimethylated DNA at replication forks via its YDG domain and recruits dnmt1 methyltransferase to ensure faithful propagation of the DNA methylation patterns through DNA replication. In addition to its role in maintenance of DNA methylation, also plays a key role in chromatin modification: through its tudor-like regions and PHD-type zinc fingers, specifically recognizes and binds histone H3 trimethylated at 'Lys-9' (H3K9me3) and unmethylated at 'Arg-2' (H3R2me0), respectively, and recruits chromatin proteins. Enriched in pericentric heterochromatin where it recruits different chromatin modifiers required for this chromatin replication. Also localizes to euchromatic regions where it negatively regulates transcription possibly by impacting DNA methylation and histone modifications. Has E3 ubiquitin-protein ligase activity by mediating the ubiquitination of target proteins. However, it is still unclear how E3 ubiquitin-protein ligase activity is related to its role in chromatin in vivo. The protein is E3 ubiquitin-protein ligase UHRF1 (uhrf1) of Xenopus tropicalis (Western clawed frog).